The following is a 457-amino-acid chain: Phosphoglucosamine mutase (457 aa).

Serine 106 acts as the Phosphoserine intermediate in catalysis. Mg(2+) contacts are provided by serine 106, aspartate 245, aspartate 247, and aspartate 249. A Phosphoserine modification is found at serine 106.

This sequence belongs to the phosphohexose mutase family. Mg(2+) serves as cofactor. Activated by phosphorylation.

It catalyses the reaction alpha-D-glucosamine 1-phosphate = D-glucosamine 6-phosphate. Its function is as follows. Catalyzes the conversion of glucosamine-6-phosphate to glucosamine-1-phosphate. This chain is Phosphoglucosamine mutase, found in Methylibium petroleiphilum (strain ATCC BAA-1232 / LMG 22953 / PM1).